Here is a 174-residue protein sequence, read N- to C-terminus: Peptide deformylase (174 aa).

Fe cation is bound by residues Cys-98 and His-140. Glu-141 is an active-site residue. Fe cation is bound at residue His-144.

It belongs to the polypeptide deformylase family. Fe(2+) is required as a cofactor.

The enzyme catalyses N-terminal N-formyl-L-methionyl-[peptide] + H2O = N-terminal L-methionyl-[peptide] + formate. In terms of biological role, removes the formyl group from the N-terminal Met of newly synthesized proteins. Requires at least a dipeptide for an efficient rate of reaction. N-terminal L-methionine is a prerequisite for activity but the enzyme has broad specificity at other positions. This is Peptide deformylase from Bradyrhizobium diazoefficiens (strain JCM 10833 / BCRC 13528 / IAM 13628 / NBRC 14792 / USDA 110).